The primary structure comprises 327 residues: Malate dehydrogenase (327 aa).

NAD(+) is bound at residue 12 to 18 (GAAGQIA). Substrate-binding residues include R93 and R99. NAD(+) is bound by residues N106, Q113, and 130 to 132 (VGN). 2 residues coordinate substrate: N132 and R163. The active-site Proton acceptor is the H188.

This sequence belongs to the LDH/MDH superfamily. MDH type 2 family.

It catalyses the reaction (S)-malate + NAD(+) = oxaloacetate + NADH + H(+). Its function is as follows. Catalyzes the reversible oxidation of malate to oxaloacetate. In Acidiphilium cryptum (strain JF-5), this protein is Malate dehydrogenase.